The chain runs to 547 residues: Chaperonin GroEL (547 aa).

ATP is bound by residues 30-33, K51, 87-91, G415, 479-481, and D495; these read TLGP, DGTTT, and NAA.

The protein belongs to the chaperonin (HSP60) family. As to quaternary structure, forms a cylinder of 14 subunits composed of two heptameric rings stacked back-to-back. Interacts with the co-chaperonin GroES.

The protein resides in the cytoplasm. The catalysed reaction is ATP + H2O + a folded polypeptide = ADP + phosphate + an unfolded polypeptide.. Together with its co-chaperonin GroES, plays an essential role in assisting protein folding. The GroEL-GroES system forms a nano-cage that allows encapsulation of the non-native substrate proteins and provides a physical environment optimized to promote and accelerate protein folding. This chain is Chaperonin GroEL, found in Pseudomonas syringae pv. syringae (strain B728a).